The following is a 316-amino-acid chain: N-acetylmuramic acid 6-phosphate etherase (316 aa).

Positions 66-229 constitute an SIS domain; sequence IVAAIGRGGR…STASMIRLGK (164 aa). The active-site Proton donor is Glu94. The active site involves Glu125.

This sequence belongs to the GCKR-like family. MurNAc-6-P etherase subfamily. Homodimer.

It catalyses the reaction N-acetyl-D-muramate 6-phosphate + H2O = N-acetyl-D-glucosamine 6-phosphate + (R)-lactate. It functions in the pathway amino-sugar metabolism; 1,6-anhydro-N-acetylmuramate degradation. Its pathway is amino-sugar metabolism; N-acetylmuramate degradation. It participates in cell wall biogenesis; peptidoglycan recycling. In terms of biological role, specifically catalyzes the cleavage of the D-lactyl ether substituent of MurNAc 6-phosphate, producing GlcNAc 6-phosphate and D-lactate. Together with AnmK, is also required for the utilization of anhydro-N-acetylmuramic acid (anhMurNAc) either imported from the medium or derived from its own cell wall murein, and thus plays a role in cell wall recycling. The sequence is that of N-acetylmuramic acid 6-phosphate etherase from Jannaschia sp. (strain CCS1).